The chain runs to 75 residues: U6-lycotoxin-Ls1h (75 aa).

A signal peptide spans 1-21; the sequence is MKLLLFTALVLVVISLIEVEA. The propeptide occupies 22-25; that stretch reads ENER.

Belongs to the neurotoxin 19 (CSTX) family. 06 (U6-Lctx) subfamily. Contains 4 disulfide bonds. As to expression, expressed by the venom gland.

It localises to the secreted. In Lycosa singoriensis (Wolf spider), this protein is U6-lycotoxin-Ls1h.